The following is a 348-amino-acid chain: MIRISLDLMGGDFGPQVVIPGAAKALDRHPDISFVFYGLKEQCDPVLAKFPKLKEKSVFHDCELAVSMSEKPSQALRRGRYISTMWRSIEAVKTGEADVAVSAGNTGALMAMAKFCLRTMANIERPAIAAIWPTLKGESIVLDVGATIGADAQQLMDFALMGGAMARALFEVERPTVGLLNVGVEEMKGQEEVKEAGRLLREANIDSLEYSGFVEGNDLGKGTVDVVVTEGFSGNIALKTAEGTAKQIGEYLRAAMSRTLLARIGYLFAKSAFDMLREKLDPSKVNGGVFLGLNGIVIKSHGGANAEGIAAAIEVGYDMAKNGLNQKIENDLKKYHAKRLPPMGPEAA.

The protein belongs to the PlsX family. Homodimer. Probably interacts with PlsY.

The protein localises to the cytoplasm. It catalyses the reaction a fatty acyl-[ACP] + phosphate = an acyl phosphate + holo-[ACP]. It functions in the pathway lipid metabolism; phospholipid metabolism. Its function is as follows. Catalyzes the reversible formation of acyl-phosphate (acyl-PO(4)) from acyl-[acyl-carrier-protein] (acyl-ACP). This enzyme utilizes acyl-ACP as fatty acyl donor, but not acyl-CoA. The chain is Phosphate acyltransferase from Rhizobium leguminosarum bv. trifolii (strain WSM2304).